The following is a 460-amino-acid chain: Bifunctional protein GlmU (460 aa).

The pyrophosphorylase stretch occupies residues 1–230 (MSNNYAIILA…FDESLGVNDR (230 aa)). UDP-N-acetyl-alpha-D-glucosamine-binding positions include 9–12 (LAAG), K23, Q73, and 78–79 (GT). A Mg(2+)-binding site is contributed by D103. G140, E155, N170, and N228 together coordinate UDP-N-acetyl-alpha-D-glucosamine. A Mg(2+)-binding site is contributed by N228. Residues 231–251 (VALATAEAVMRKRINEKHMVN) form a linker region. Residues 252–460 (GVTFINPDAT…TRFPFHPSQK (209 aa)) form an N-acetyltransferase region. Positions 333 and 351 each coordinate UDP-N-acetyl-alpha-D-glucosamine. H363 (proton acceptor) is an active-site residue. Residues Y366 and N377 each contribute to the UDP-N-acetyl-alpha-D-glucosamine site. Acetyl-CoA is bound by residues A380, 386-387 (NY), S405, A423, and R440.

In the N-terminal section; belongs to the N-acetylglucosamine-1-phosphate uridyltransferase family. This sequence in the C-terminal section; belongs to the transferase hexapeptide repeat family. As to quaternary structure, homotrimer. The cofactor is Mg(2+).

It localises to the cytoplasm. The catalysed reaction is alpha-D-glucosamine 1-phosphate + acetyl-CoA = N-acetyl-alpha-D-glucosamine 1-phosphate + CoA + H(+). It catalyses the reaction N-acetyl-alpha-D-glucosamine 1-phosphate + UTP + H(+) = UDP-N-acetyl-alpha-D-glucosamine + diphosphate. It functions in the pathway nucleotide-sugar biosynthesis; UDP-N-acetyl-alpha-D-glucosamine biosynthesis; N-acetyl-alpha-D-glucosamine 1-phosphate from alpha-D-glucosamine 6-phosphate (route II): step 2/2. Its pathway is nucleotide-sugar biosynthesis; UDP-N-acetyl-alpha-D-glucosamine biosynthesis; UDP-N-acetyl-alpha-D-glucosamine from N-acetyl-alpha-D-glucosamine 1-phosphate: step 1/1. It participates in bacterial outer membrane biogenesis; LPS lipid A biosynthesis. Catalyzes the last two sequential reactions in the de novo biosynthetic pathway for UDP-N-acetylglucosamine (UDP-GlcNAc). The C-terminal domain catalyzes the transfer of acetyl group from acetyl coenzyme A to glucosamine-1-phosphate (GlcN-1-P) to produce N-acetylglucosamine-1-phosphate (GlcNAc-1-P), which is converted into UDP-GlcNAc by the transfer of uridine 5-monophosphate (from uridine 5-triphosphate), a reaction catalyzed by the N-terminal domain. This chain is Bifunctional protein GlmU, found in Streptococcus suis (strain 98HAH33).